A 109-amino-acid polypeptide reads, in one-letter code: MNVQLILRSLTYKEEQRVIIRPIGERVLLKHQKKEEVTKGGIYIPESARQEKKEGIVIAVGTFEDGKELPLKKGDHVIYGGYQADEIEIDDEKYIFVDFKDILATVVEE.

Belongs to the GroES chaperonin family. In terms of assembly, heptamer of 7 subunits arranged in a ring. Interacts with the chaperonin GroEL.

The protein localises to the cytoplasm. Its function is as follows. Together with the chaperonin GroEL, plays an essential role in assisting protein folding. The GroEL-GroES system forms a nano-cage that allows encapsulation of the non-native substrate proteins and provides a physical environment optimized to promote and accelerate protein folding. GroES binds to the apical surface of the GroEL ring, thereby capping the opening of the GroEL channel. This is Co-chaperonin GroES from Methanosarcina acetivorans (strain ATCC 35395 / DSM 2834 / JCM 12185 / C2A).